A 291-amino-acid polypeptide reads, in one-letter code: G1/S-specific cyclin-D1 (291 aa).

A Phosphothreonine modification is found at Thr-282.

This sequence belongs to the cyclin family. Cyclin D subfamily. In terms of assembly, interacts with the CDK4 and CDK6 protein kinases to form a serine/threonine kinase holoenzyme complex. The cyclin subunit imparts substrate specificity to the complex. In terms of processing, phosphorylation at Thr-282 by MAP kinases is required for ubiquitination and degradation by the DCX(AMBRA1) complex. Ubiquitinated by the DCX(AMBRA1) complex during the transition from G1 to S cell phase, leading to its degradation. The DCX(AMBRA1) complex represents the major regulator of CCND1 stability during the G1/S transition.

The protein resides in the nucleus. It localises to the cytoplasm. Functionally, regulatory component of the cyclin D1-CDK4 (DC) complex that phosphorylates and inhibits members of the retinoblastoma (RB) protein family including RB1 and regulates the cell-cycle during G(1)/S transition. Phosphorylation of RB1 allows dissociation of the transcription factor E2F from the RB/E2F complex and the subsequent transcription of E2F target genes which are responsible for the progression through the G(1) phase. Hypophosphorylates RB1 in early G(1) phase. Cyclin D-CDK4 complexes are major integrators of various mitogenenic and antimitogenic signals. In Danio rerio (Zebrafish), this protein is G1/S-specific cyclin-D1 (ccnd1).